An 84-amino-acid polypeptide reads, in one-letter code: uncharacterized protein (84 aa).

This is an uncharacterized protein from Micrococcus luteus (Micrococcus lysodeikticus).